The sequence spans 193 residues: MEERRPGMGVIVPAGEAGRTTVEGYDPKLHDPYFDGVSQRLADKGFVTAAADDLITWARTGSLMWMTFGLACCAVEMMQASMPRYDLERYGFAPRASPRQSDVMIVAGTLVNKMAPALRKVYDQMPEPRYVISMGSCANGGGYYYFSYSTVRGCDRVVPVDVYVPGCPPTAEALVYGVLQLQKKIRRTGTIVR.

Residues C72, C73, C137, and C167 each coordinate [4Fe-4S] cluster.

This sequence belongs to the complex I 20 kDa subunit family. In terms of assembly, NDH-1 is composed of 14 different subunits. Subunits NuoB, C, D, E, F, and G constitute the peripheral sector of the complex. It depends on [4Fe-4S] cluster as a cofactor.

The protein localises to the cell inner membrane. It carries out the reaction a quinone + NADH + 5 H(+)(in) = a quinol + NAD(+) + 4 H(+)(out). Functionally, NDH-1 shuttles electrons from NADH, via FMN and iron-sulfur (Fe-S) centers, to quinones in the respiratory chain. The immediate electron acceptor for the enzyme in this species is believed to be ubiquinone. Couples the redox reaction to proton translocation (for every two electrons transferred, four hydrogen ions are translocated across the cytoplasmic membrane), and thus conserves the redox energy in a proton gradient. The chain is NADH-quinone oxidoreductase subunit B from Phenylobacterium zucineum (strain HLK1).